The following is a 491-amino-acid chain: Calcium/calmodulin-dependent protein kinase type II delta 1 chain (491 aa).

One can recognise a Protein kinase domain in the interval Y13–I271. Residues L19–V27 and K42 contribute to the ATP site. D135 functions as the Proton acceptor in the catalytic mechanism. Position 286 is a phosphothreonine (T286). A Phosphoserine modification is found at S314. Positions S315–E354 are disordered. Positions P328–D338 are enriched in polar residues. T350 is modified (phosphothreonine).

This sequence belongs to the protein kinase superfamily. CAMK Ser/Thr protein kinase family. CaMK subfamily. In terms of assembly, CAMK2 is composed of four different chains: alpha, beta, gamma, and delta. The different isoforms assemble into homo- or heteromultimeric holoenzymes composed of 8 to 12 subunits. As to expression, first detected at the 18-somite stage where expression is restricted to somite boundaries. At 24 hpf, expression is elevated in epidermal tissue and in the hatching gland. After 24 hpf, expression dimishes, but persists at low levels along the dorsal trunk. At 48 hpf, expression is restricted at a low level to the forebrain. At 72 hpf, weak expression reappears along the entire dorsal trunk in discrete cell bodies.

The enzyme catalyses L-seryl-[protein] + ATP = O-phospho-L-seryl-[protein] + ADP + H(+). The catalysed reaction is L-threonyl-[protein] + ATP = O-phospho-L-threonyl-[protein] + ADP + H(+). Its activity is regulated as follows. Autophosphorylation of CAMK2 plays an important role in the regulation of the kinase activity. In terms of biological role, caM-kinase II (CAMK2) is a prominent kinase in the central nervous system. The sequence is that of Calcium/calmodulin-dependent protein kinase type II delta 1 chain from Danio rerio (Zebrafish).